The chain runs to 353 residues: 4-hydroxy-2-oxovalerate aldolase 2 (353 aa).

Positions 14 to 266 (VRMTDTSLRD…KTGIDFFDIA (253 aa)) constitute a Pyruvate carboxyltransferase domain. Position 22–23 (22–23 (RD)) interacts with substrate. Position 23 (Asp23) interacts with Mn(2+). His26 acts as the Proton acceptor in catalysis. Substrate contacts are provided by Ser176 and His205. Positions 205 and 207 each coordinate Mn(2+). A substrate-binding site is contributed by Tyr296.

Belongs to the 4-hydroxy-2-oxovalerate aldolase family.

It carries out the reaction (S)-4-hydroxy-2-oxopentanoate = acetaldehyde + pyruvate. The chain is 4-hydroxy-2-oxovalerate aldolase 2 from Mycobacterium sp. (strain JLS).